Consider the following 287-residue polypeptide: Probable endoribonuclease YicC (287 aa).

This sequence belongs to the YicC/YloC family. Requires a divalent metal cation as cofactor.

Functionally, probably a ssRNA endonuclease. Its function is as follows. Might contribute to small RNA (sRNA) regulation. The sequence is that of Probable endoribonuclease YicC from Salmonella typhimurium (strain LT2 / SGSC1412 / ATCC 700720).